The primary structure comprises 359 residues: MRGTDEKYGLPPQPDSDRMTRRTLPVLGLAHELITPTLRQMADRLDPHMRPVVSYHLGWSDERGRPVNNNCGKAIRPALVFVAAEAAGADPHSAIPGAVSVELVHNFSLVHDDLMDRDEHRRHRPTVWALWGDAMALLAGDAMLSLAHEVLLDCDSPHVGAALRAISEATRELIRGQAADTAFESRTDVALDECLKMAEGKTAALMAASAEVGALLAGAPRSVREALVAYGRHIGLAFQLVDDLLGIWGRPEITGKPVYSDLRSRKKTLPVTWTVAHGGSAGRRLAAWLVDETGSQTASDDELAAVAELIECGGGRRWASAEARRHVTQGIDMVARIGIPDRPAAELQDLAHYIVDRQA.

The interval 1 to 21 is disordered; it reads MRGTDEKYGLPPQPDSDRMTR. Positions 73, 76, and 105 each coordinate isopentenyl diphosphate. Positions 112 and 116 each coordinate Mg(2+). Positions 112 to 116 match the DDXXD motif motif; sequence DDLMD. R121 is a (2E)-geranyl diphosphate binding site. Position 122 (R122) interacts with isopentenyl diphosphate. K201, T202, and Q239 together coordinate (2E)-geranyl diphosphate. The short motif at 242 to 246 is the DDXXD motif element; sequence DDLLG. 2 residues coordinate (2E)-geranyl diphosphate: K256 and K266.

The protein belongs to the FPP/GGPP synthase family. It depends on Mg(2+) as a cofactor.

It localises to the cytoplasm. The enzyme catalyses isopentenyl diphosphate + (2E)-geranyl diphosphate = (2E,6E)-farnesyl diphosphate + diphosphate. It functions in the pathway isoprenoid biosynthesis; farnesyl diphosphate biosynthesis; farnesyl diphosphate from geranyl diphosphate and isopentenyl diphosphate. Functionally, catalyzes the condensation of isopentenyl pyrophosphate (IPP) with geranyl diphosphate (GPP) to yield (2E,6E)-farnesyl diphosphate (E,E-FPP). May be used for squalene and possibly sterol biosynthesis. This chain is (2E,6E)-farnesyl diphosphate synthase, found in Mycobacterium bovis (strain ATCC BAA-935 / AF2122/97).